Reading from the N-terminus, the 282-residue chain is Nucleotide-binding protein XAC2976 (282 aa).

5–12 contributes to the ATP binding site; that stretch reads GLSGSGKS. Position 57–60 (57–60) interacts with GTP; that stretch reads DVRS.

It belongs to the RapZ-like family.

Displays ATPase and GTPase activities. The protein is Nucleotide-binding protein XAC2976 of Xanthomonas axonopodis pv. citri (strain 306).